Consider the following 309-residue polypeptide: Protein FdhE homolog (309 aa).

It belongs to the FdhE family.

The protein resides in the cytoplasm. Functionally, necessary for formate dehydrogenase activity. The sequence is that of Protein FdhE homolog from Klebsiella pneumoniae (strain 342).